A 335-amino-acid polypeptide reads, in one-letter code: Protein PXR1 (335 aa).

The region spanning 25–71 (KSRFGHKYLEKLGWEPGKGLGHASHAMSTHIKVTIKDDTMGLGAKLK) is the G-patch domain. The tract at residues 155 to 310 (DDAEDAKVSG…PPTISTRLSV (156 aa)) is disordered. Residues 163–175 (SGKHRDRKSRAKR) are compositionally biased toward basic residues. The span at 183-209 (LKEKCRDIDRTRKSKRKEKEQEKEKNR) shows a compositional bias: basic and acidic residues. The span at 226-257 (KKDKKDKKEKKEKKEKKEKKEKKHKEKSNKRL) shows a compositional bias: basic residues.

Belongs to the PINX1 family.

The protein resides in the nucleus. It localises to the nucleolus. Functionally, involved in rRNA-processing at A0, A1 and A2 sites and negatively regulates telomerase. This chain is Protein PXR1 (PXR1), found in Eremothecium gossypii (strain ATCC 10895 / CBS 109.51 / FGSC 9923 / NRRL Y-1056) (Yeast).